We begin with the raw amino-acid sequence, 270 residues long: Tryptophan synthase alpha chain (270 aa).

Active-site proton acceptor residues include glutamate 49 and aspartate 60.

It belongs to the TrpA family. Tetramer of two alpha and two beta chains.

It catalyses the reaction (1S,2R)-1-C-(indol-3-yl)glycerol 3-phosphate + L-serine = D-glyceraldehyde 3-phosphate + L-tryptophan + H2O. Its pathway is amino-acid biosynthesis; L-tryptophan biosynthesis; L-tryptophan from chorismate: step 5/5. Its function is as follows. The alpha subunit is responsible for the aldol cleavage of indoleglycerol phosphate to indole and glyceraldehyde 3-phosphate. The sequence is that of Tryptophan synthase alpha chain from Marinobacter nauticus (strain ATCC 700491 / DSM 11845 / VT8) (Marinobacter aquaeolei).